Here is an 865-residue protein sequence, read N- to C-terminus: Leucine--tRNA ligase (865 aa).

The 'HIGH' region motif lies at 44-54 (PYPSGRIHVGH). The 'KMSKS' region signature appears at 625 to 629 (KMSKS). Position 628 (K628) interacts with ATP.

It belongs to the class-I aminoacyl-tRNA synthetase family.

Its subcellular location is the cytoplasm. It carries out the reaction tRNA(Leu) + L-leucine + ATP = L-leucyl-tRNA(Leu) + AMP + diphosphate. In Maricaulis maris (strain MCS10) (Caulobacter maris), this protein is Leucine--tRNA ligase.